The following is a 149-amino-acid chain: Arginine repressor (149 aa).

It belongs to the ArgR family.

Its subcellular location is the cytoplasm. The protein operates within amino-acid biosynthesis; L-arginine biosynthesis [regulation]. In terms of biological role, regulates arginine biosynthesis genes. The chain is Arginine repressor from Oceanobacillus iheyensis (strain DSM 14371 / CIP 107618 / JCM 11309 / KCTC 3954 / HTE831).